A 130-amino-acid chain; its full sequence is NADH-quinone oxidoreductase subunit A (130 aa).

Transmembrane regions (helical) follow at residues 15 to 35 (AIHVALSAGIVAAIIVVATII), 67 to 87 (FLIAALFVIFDMEAAILFAWA), and 95 to 115 (WVGLIEAAIFIGVLLLALIYL).

Belongs to the complex I subunit 3 family. In terms of assembly, NDH-1 is composed of 14 different subunits. Subunits NuoA, H, J, K, L, M, N constitute the membrane sector of the complex.

The protein resides in the cell inner membrane. It catalyses the reaction a quinone + NADH + 5 H(+)(in) = a quinol + NAD(+) + 4 H(+)(out). Functionally, NDH-1 shuttles electrons from NADH, via FMN and iron-sulfur (Fe-S) centers, to quinones in the respiratory chain. The immediate electron acceptor for the enzyme in this species is believed to be ubiquinone. Couples the redox reaction to proton translocation (for every two electrons transferred, four hydrogen ions are translocated across the cytoplasmic membrane), and thus conserves the redox energy in a proton gradient. In Rhodopseudomonas palustris (strain BisA53), this protein is NADH-quinone oxidoreductase subunit A.